A 322-amino-acid polypeptide reads, in one-letter code: Gas vesicle protein L (322 aa).

A disordered region spans residues 1–85 (MTEQSSGSAT…SEQATVDWST (85 aa)). Positions 17 to 36 (ETAKQETGRKNEQPEERTVT) are enriched in basic and acidic residues. Residues 45–57 (INTTTAESETGSE) show a composition bias toward polar residues. A compositionally biased stretch (basic and acidic residues) spans 58–72 (QESKAGSEQESKAGS). Residues 73 to 85 (EQESEQATVDWST) are compositionally biased toward polar residues.

Belongs to the gas vesicle GvpF/GvpL family. As to quaternary structure, gvpF to GvpM interact with each other in vitro, and may form multi-subunit complex(es). Interacts with GvpC, GvpN and GvpO.

Its subcellular location is the gas vesicle. Functionally, proteins GvpF to GvpM might be involved in nucleating gas vesicle formation. A minor component of the gas vesicle. Gas vesicles are small, hollow, gas filled protein structures that are found in several microbial planktonic microorganisms. They allow positioning of halobacteria at the optimal depth for growth in the poorly aerated, shallow brine pools of their habitat. Expression of a 9.5 kb mc-vac DNA fragment containing 2 divergently transcribed regions (gvpD-gvpE-gvpF-gvpG-gvpH-gvpI-gvpJ-gvpK-gvpL-gvpM and gvpA-gvpC-gvpN-gvpO) allows H.volcanii to produce gas vesicles. The sequence is that of Gas vesicle protein L from Haloferax mediterranei (strain ATCC 33500 / DSM 1411 / JCM 8866 / NBRC 14739 / NCIMB 2177 / R-4) (Halobacterium mediterranei).